A 502-amino-acid chain; its full sequence is Lanosterol 14-alpha demethylase (502 aa).

A helical membrane pass occupies residues 22–42 (GNLASMLLIACAFTLSLVYLF). Cysteine 448 lines the heme pocket.

Belongs to the cytochrome P450 family. Heme is required as a cofactor. Post-translationally, ubiquitinated by MARCHF6, leading to proteasomal degradation.

It is found in the endoplasmic reticulum membrane. The protein localises to the microsome membrane. It carries out the reaction a 14alpha-methyl steroid + 3 reduced [NADPH--hemoprotein reductase] + 3 O2 = a Delta(14) steroid + formate + 3 oxidized [NADPH--hemoprotein reductase] + 4 H2O + 4 H(+). It catalyses the reaction lanosterol + 3 reduced [NADPH--hemoprotein reductase] + 3 O2 = 4,4-dimethyl-5alpha-cholesta-8,14,24-trien-3beta-ol + formate + 3 oxidized [NADPH--hemoprotein reductase] + 4 H2O + 4 H(+). The catalysed reaction is 24,25-dihydrolanosterol + 3 reduced [NADPH--hemoprotein reductase] + 3 O2 = 4,4-dimethyl-8,14-cholestadien-3beta-ol + formate + 3 oxidized [NADPH--hemoprotein reductase] + 4 H2O + 4 H(+). The enzyme catalyses a 14alpha-methyl steroid + reduced [NADPH--hemoprotein reductase] + O2 = a 14alpha-hydroxymethyl steroid + oxidized [NADPH--hemoprotein reductase] + H2O + H(+). It carries out the reaction a 14alpha-hydroxymethyl steroid + reduced [NADPH--hemoprotein reductase] + O2 = a 14alpha-formyl steroid + oxidized [NADPH--hemoprotein reductase] + 2 H2O + H(+). It catalyses the reaction a 14alpha-formyl steroid + reduced [NADPH--hemoprotein reductase] + O2 = a Delta(14) steroid + formate + oxidized [NADPH--hemoprotein reductase] + H2O + 2 H(+). The catalysed reaction is lanosterol + reduced [NADPH--hemoprotein reductase] + O2 = 32-hydroxylanosterol + oxidized [NADPH--hemoprotein reductase] + H2O + H(+). The enzyme catalyses 32-hydroxylanosterol + reduced [NADPH--hemoprotein reductase] + O2 = 32-oxolanosterol + oxidized [NADPH--hemoprotein reductase] + 2 H2O + H(+). It carries out the reaction 32-oxolanosterol + reduced [NADPH--hemoprotein reductase] + O2 = 4,4-dimethyl-5alpha-cholesta-8,14,24-trien-3beta-ol + formate + oxidized [NADPH--hemoprotein reductase] + H2O + 2 H(+). It catalyses the reaction 24,25-dihydrolanosterol + reduced [NADPH--hemoprotein reductase] + O2 = 32-hydroxy-24,25-dihydrolanosterol + oxidized [NADPH--hemoprotein reductase] + H2O + H(+). The catalysed reaction is 32-hydroxy-24,25-dihydrolanosterol + reduced [NADPH--hemoprotein reductase] + O2 = 32-oxo-24,25-dihydrolanosterol + oxidized [NADPH--hemoprotein reductase] + 2 H2O + H(+). The enzyme catalyses 32-oxo-24,25-dihydrolanosterol + reduced [NADPH--hemoprotein reductase] + O2 = 4,4-dimethyl-8,14-cholestadien-3beta-ol + formate + oxidized [NADPH--hemoprotein reductase] + H2O + 2 H(+). The protein operates within steroid biosynthesis; zymosterol biosynthesis; zymosterol from lanosterol: step 1/6. With respect to regulation, inhibited by azalanstat. Inhibited by azole antifungal agents ketoconazole, itraconazole and fluconazole. Its function is as follows. Sterol 14alpha-demethylase that plays a critical role in the cholesterol biosynthesis pathway, being cholesterol the major sterol component in mammalian membranes as well as a precursor for bile acid and steroid hormone synthesis. Cytochrome P450 monooxygenase that catalyzes the three-step oxidative removal of the 14alpha-methyl group (C-32) of sterols such as lanosterol (lanosta-8,24-dien-3beta-ol) and 24,25-dihydrolanosterol (DHL) in the form of formate, and converts the sterols to 4,4-dimethyl-5alpha-cholesta-8,14,24-trien-3beta-ol and 4,4-dimethyl-8,14-cholestadien-3beta-ol, respectively, which are intermediates of cholesterol biosynthesis. Can also demethylate substrates not intrinsic to mammals, such as eburicol (24-methylene-24,25-dihydrolanosterol), but at a lower rate than DHL. This is Lanosterol 14-alpha demethylase from Bos taurus (Bovine).